Consider the following 103-residue polypeptide: Acylphosphatase-2 (103 aa).

Residues Ser13–Tyr103 enclose the Acylphosphatase-like domain. Catalysis depends on residues Arg28 and Asn46.

The protein belongs to the acylphosphatase family.

The enzyme catalyses an acyl phosphate + H2O = a carboxylate + phosphate + H(+). The polypeptide is Acylphosphatase-2 (acyp2) (Xenopus tropicalis (Western clawed frog)).